The sequence spans 298 residues: Tyrosine recombinase XerD (298 aa).

The Core-binding (CB) domain occupies 3-88 (SSHNNLLQNF…AIRQFYKFLK (86 aa)). The 184-residue stretch at 109–292 (SIPDYLTQDE…ANKTLREVHK (184 aa)) folds into the Tyr recombinase domain. Catalysis depends on residues Arg-149, Lys-173, His-244, Arg-247, and His-270. Tyr-279 (O-(3'-phospho-DNA)-tyrosine intermediate) is an active-site residue.

The protein belongs to the 'phage' integrase family. XerD subfamily. As to quaternary structure, forms a cyclic heterotetrameric complex composed of two molecules of XerC and two molecules of XerD.

The protein resides in the cytoplasm. Its function is as follows. Site-specific tyrosine recombinase, which acts by catalyzing the cutting and rejoining of the recombining DNA molecules. The XerC-XerD complex is essential to convert dimers of the bacterial chromosome into monomers to permit their segregation at cell division. It also contributes to the segregational stability of plasmids. In Leptospira interrogans serogroup Icterohaemorrhagiae serovar copenhageni (strain Fiocruz L1-130), this protein is Tyrosine recombinase XerD.